The following is a 211-amino-acid chain: Pyridoxine/pyridoxamine 5'-phosphate oxidase (211 aa).

Substrate contacts are provided by residues 8–11 and Lys-66; that span reads RRDY. FMN-binding positions include 61-66, 76-77, Arg-82, Lys-83, and Gln-105; these read RLVLLK and FT. Residues Tyr-123, Arg-127, and Ser-131 each contribute to the substrate site. FMN contacts are provided by residues 140 to 141 and Trp-184; that span reads QS. 190 to 192 contacts substrate; that stretch reads RLH. FMN is bound at residue Arg-194.

It belongs to the pyridoxamine 5'-phosphate oxidase family. As to quaternary structure, homodimer. Requires FMN as cofactor.

The enzyme catalyses pyridoxamine 5'-phosphate + O2 + H2O = pyridoxal 5'-phosphate + H2O2 + NH4(+). The catalysed reaction is pyridoxine 5'-phosphate + O2 = pyridoxal 5'-phosphate + H2O2. Its pathway is cofactor metabolism; pyridoxal 5'-phosphate salvage; pyridoxal 5'-phosphate from pyridoxamine 5'-phosphate: step 1/1. It functions in the pathway cofactor metabolism; pyridoxal 5'-phosphate salvage; pyridoxal 5'-phosphate from pyridoxine 5'-phosphate: step 1/1. Catalyzes the oxidation of either pyridoxine 5'-phosphate (PNP) or pyridoxamine 5'-phosphate (PMP) into pyridoxal 5'-phosphate (PLP). This Thermosynechococcus vestitus (strain NIES-2133 / IAM M-273 / BP-1) protein is Pyridoxine/pyridoxamine 5'-phosphate oxidase.